A 931-amino-acid chain; its full sequence is Phosphoenolpyruvate carboxylase (931 aa).

Residues H158 and K593 contribute to the active site.

The protein belongs to the PEPCase type 1 family. The cofactor is Mg(2+).

The catalysed reaction is oxaloacetate + phosphate = phosphoenolpyruvate + hydrogencarbonate. Its function is as follows. Forms oxaloacetate, a four-carbon dicarboxylic acid source for the tricarboxylic acid cycle. The chain is Phosphoenolpyruvate carboxylase from Azorhizobium caulinodans (strain ATCC 43989 / DSM 5975 / JCM 20966 / LMG 6465 / NBRC 14845 / NCIMB 13405 / ORS 571).